We begin with the raw amino-acid sequence, 184 residues long: 3-hydroxyanthranilate 3,4-dioxygenase (184 aa).

O2 is bound at residue R44. Fe cation-binding residues include H48, E54, and H92. E54 provides a ligand contact to substrate. Residues R96 and E106 each coordinate substrate. 4 residues coordinate a divalent metal cation: C121, C126, C162, and C165.

This sequence belongs to the 3-HAO family. The cofactor is Fe(2+).

It is found in the cytoplasm. The catalysed reaction is 3-hydroxyanthranilate + O2 = (2Z,4Z)-2-amino-3-carboxymuconate 6-semialdehyde. Its pathway is cofactor biosynthesis; NAD(+) biosynthesis; quinolinate from L-kynurenine: step 3/3. Catalyzes the oxidative ring opening of 3-hydroxyanthranilate to 2-amino-3-carboxymuconate semialdehyde, which spontaneously cyclizes to quinolinate. This Pyricularia oryzae (strain 70-15 / ATCC MYA-4617 / FGSC 8958) (Rice blast fungus) protein is 3-hydroxyanthranilate 3,4-dioxygenase.